Reading from the N-terminus, the 393-residue chain is uncharacterized protein (393 aa).

Belongs to the Gfo/Idh/MocA family.

This is an uncharacterized protein from Bacillus subtilis (strain 168).